Reading from the N-terminus, the 107-residue chain is Small ribosomal subunit protein uS10 (107 aa).

Belongs to the universal ribosomal protein uS10 family. In terms of assembly, part of the 30S ribosomal subunit.

Involved in the binding of tRNA to the ribosomes. The sequence is that of Small ribosomal subunit protein uS10 from Deinococcus geothermalis (strain DSM 11300 / CIP 105573 / AG-3a).